The primary structure comprises 228 residues: N-acylneuraminate cytidylyltransferase (228 aa).

It belongs to the CMP-NeuNAc synthase family.

Its subcellular location is the cytoplasm. It catalyses the reaction an N-acylneuraminate + CTP = a CMP-N-acyl-beta-neuraminate + diphosphate. The chain is N-acylneuraminate cytidylyltransferase (neuA) from Neisseria meningitidis serogroup B (strain ATCC BAA-335 / MC58).